The chain runs to 640 residues: MTYSLLPHIHSPQDLHALSLDKLPVLCDEIRNKIIESLSLTGGHLASNLGGVELTVALHYVFSSPDDQFIFDVGHQSYVHKLLTGRNTEAFSNIRHDNGLSGFTTPQESNHDIFFSGHAGNALSLALGLAKGSSNSSSHILPILGDAAFSCGLTLEALNNIPADLSKFIIVLNDNQMSISENVGNIPQGISHWMYPQKISKLSQKIHSWIQNLPSFLHKKKTLSHKVDIALKSLSHPLFEQFGLHYVGPIDGHNVKKLVQALQMIKDQPQPILFHVCTVKGNGLAEAERDPIRYHGVKAHFQNTSLKKTSGNVELQTPISFPQHAGNILCRLGKKYPQLQVVTPAMSLGSCLEDFRKQFPDRFTDVGIAEGHAVTFSAGIARSGTPVCCSIYSTFLHRAMDNVFHDVCMQELPVIFAIDRAGLAFHDGRSHHGIYDLGFLCSMPNMVICQPRNALVLERLFFSSLLWKSPCAIRYPNIPANEKASNSFFPFSPILPGEAEILCQGDDLLLIALGHMCNTALTVKEHLLDYGISTTVVDPIFIKPLDRKLLQSLLTHHSKVIILEEHSIHGGLGSEFLLFLNQHNIKADVLSLGVPDMFIPHGNPETILNLIGLTSDHITQRILSHFKFSTPIPIERFFKA.

Residues H75 and 117 to 119 (GHA) each bind thiamine diphosphate. D146 contacts Mg(2+). Residues 147 to 148 (AA), N175, and E370 contribute to the thiamine diphosphate site. Residue N175 participates in Mg(2+) binding.

The protein belongs to the transketolase family. DXPS subfamily. As to quaternary structure, homodimer. Requires Mg(2+) as cofactor. It depends on thiamine diphosphate as a cofactor.

The enzyme catalyses D-glyceraldehyde 3-phosphate + pyruvate + H(+) = 1-deoxy-D-xylulose 5-phosphate + CO2. It participates in metabolic intermediate biosynthesis; 1-deoxy-D-xylulose 5-phosphate biosynthesis; 1-deoxy-D-xylulose 5-phosphate from D-glyceraldehyde 3-phosphate and pyruvate: step 1/1. In terms of biological role, catalyzes the acyloin condensation reaction between C atoms 2 and 3 of pyruvate and glyceraldehyde 3-phosphate to yield 1-deoxy-D-xylulose-5-phosphate (DXP). The sequence is that of 1-deoxy-D-xylulose-5-phosphate synthase from Chlamydia trachomatis serovar D (strain ATCC VR-885 / DSM 19411 / UW-3/Cx).